The chain runs to 384 residues: Homoserine O-succinyltransferase (384 aa).

The 311-residue stretch at 51-361 (NAILICHALS…ETSQGHDAFL (311 aa)) folds into the AB hydrolase-1 domain. S157 (nucleophile) is an active-site residue. R227 contributes to the substrate binding site. Catalysis depends on residues D324 and H357. D358 lines the substrate pocket.

Belongs to the AB hydrolase superfamily. MetX family. In terms of assembly, homodimer.

It localises to the cytoplasm. It carries out the reaction L-homoserine + succinyl-CoA = O-succinyl-L-homoserine + CoA. The protein operates within amino-acid biosynthesis; L-methionine biosynthesis via de novo pathway; O-succinyl-L-homoserine from L-homoserine: step 1/1. Its function is as follows. Transfers a succinyl group from succinyl-CoA to L-homoserine, forming succinyl-L-homoserine. The protein is Homoserine O-succinyltransferase of Alkalilimnicola ehrlichii (strain ATCC BAA-1101 / DSM 17681 / MLHE-1).